Consider the following 434-residue polypeptide: Enolase (434 aa).

Residue Ala41 participates in phosphoenolpyruvate binding. Gln165 contacts (2R)-2-phosphoglycerate. The active-site Proton donor is the Glu207. Residues Asp244, Glu291, and Asp318 each contribute to the Mg(2+) site. Positions 343, 372, 373, and 394 each coordinate phosphoenolpyruvate. Positions 343, 372, 373, and 394 each coordinate (2R)-2-phosphoglycerate. The active-site Proton acceptor is the Lys343.

The protein belongs to the enolase family. Homodimer and homooctamer; the homodimer is inactive. Mg(2+) is required as a cofactor.

The protein localises to the cytoplasm. It is found in the secreted. The protein resides in the cell surface. It carries out the reaction (2R)-2-phosphoglycerate = phosphoenolpyruvate + H2O. It functions in the pathway carbohydrate degradation; glycolysis; pyruvate from D-glyceraldehyde 3-phosphate: step 4/5. Its function is as follows. Catalyzes the reversible conversion of 2-phosphoglycerate (2-PG) into phosphoenolpyruvate (PEP). It is essential for the degradation of carbohydrates via glycolysis. 'Moonlights' as a laminin receptor. Binds laminin when expressed on the bacterial cell surface; this probably induces destruction of the extracellular matrix, favoring invasion and dissemination. In Staphylococcus aureus, this protein is Enolase.